The following is a 233-amino-acid chain: Probable transglycosylase IsaA (233 aa).

Positions 1–29 (MKKTIMASSLAVALGVTGYAAGTGHQAHA) are cleaved as a signal peptide.

This sequence belongs to the transglycosylase family. IsaA subfamily.

The protein resides in the secreted. Is able to cleave peptidoglycan. This is Probable transglycosylase IsaA (isaA) from Staphylococcus aureus (strain Mu3 / ATCC 700698).